The sequence spans 398 residues: Enolase (398 aa).

(2R)-2-phosphoglycerate is bound at residue Gln154. The active-site Proton donor is Glu196. Positions 232, 273, and 300 each coordinate Mg(2+). (2R)-2-phosphoglycerate-binding residues include Lys325, Arg354, Ser355, and Lys376. The active-site Proton acceptor is the Lys325.

The protein belongs to the enolase family. The cofactor is Mg(2+).

The protein resides in the cytoplasm. Its subcellular location is the secreted. The protein localises to the cell surface. It catalyses the reaction (2R)-2-phosphoglycerate = phosphoenolpyruvate + H2O. It functions in the pathway carbohydrate degradation; glycolysis; pyruvate from D-glyceraldehyde 3-phosphate: step 4/5. Catalyzes the reversible conversion of 2-phosphoglycerate (2-PG) into phosphoenolpyruvate (PEP). It is essential for the degradation of carbohydrates via glycolysis. This Natronomonas pharaonis (strain ATCC 35678 / DSM 2160 / CIP 103997 / JCM 8858 / NBRC 14720 / NCIMB 2260 / Gabara) (Halobacterium pharaonis) protein is Enolase.